The following is a 404-amino-acid chain: S-adenosylmethionine synthase (404 aa).

H17 is a binding site for ATP. Position 19 (D19) interacts with Mg(2+). E45 lines the K(+) pocket. Residues E58 and Q101 each contribute to the L-methionine site. The tract at residues 101–111 (QSPDINRGVDR) is flexible loop. Residues 172 to 174 (DAK), 245 to 246 (RF), D254, 260 to 261 (RK), A277, and K281 contribute to the ATP site. An L-methionine-binding site is contributed by D254. K285 lines the L-methionine pocket.

Belongs to the AdoMet synthase family. Homotetramer; dimer of dimers. Requires Mg(2+) as cofactor. K(+) serves as cofactor.

The protein localises to the cytoplasm. It catalyses the reaction L-methionine + ATP + H2O = S-adenosyl-L-methionine + phosphate + diphosphate. Its pathway is amino-acid biosynthesis; S-adenosyl-L-methionine biosynthesis; S-adenosyl-L-methionine from L-methionine: step 1/1. Catalyzes the formation of S-adenosylmethionine (AdoMet) from methionine and ATP. The overall synthetic reaction is composed of two sequential steps, AdoMet formation and the subsequent tripolyphosphate hydrolysis which occurs prior to release of AdoMet from the enzyme. This chain is S-adenosylmethionine synthase, found in Pelodictyon phaeoclathratiforme (strain DSM 5477 / BU-1).